The sequence spans 543 residues: T-complex protein 1 subunit eta (543 aa).

At M1 the chain carries N-acetylmethionine. Residue G41 coordinates ADP. G41 provides a ligand contact to ATP. K67 carries the post-translational modification N6-acetyllysine. D92 lines the Mg(2+) pocket. Residues G93, T94, T95, S96, S164, and S165 each coordinate ADP. Position 93 (G93) interacts with ATP. S96 contacts ATP. Residues K250 and K320 each carry the N6-acetyllysine modification. Residues R398 and G409 each coordinate ATP. G409 provides a ligand contact to ADP. Residue K430 forms a Glycyl lysine isopeptide (Lys-Gly) (interchain with G-Cter in SUMO2) linkage. Residues E494 and R499 each contribute to the ADP site. Position 499 (R499) interacts with ATP. Residues 524–543 are disordered; that stretch reads RSTVDAPTAAGRGRGRGRPH. Position 535 is an omega-N-methylarginine (R535).

This sequence belongs to the TCP-1 chaperonin family. In terms of assembly, component of the chaperonin-containing T-complex (TRiC), a hexadecamer composed of two identical back-to-back stacked rings enclosing a protein folding chamber. Each ring is made up of eight different subunits: TCP1/CCT1, CCT2, CCT3, CCT4, CCT5, CCT6A/CCT6, CCT7, CCT8. Interacts with PACRG. Interacts with DLEC1.

It is found in the cytoplasm. It catalyses the reaction ATP + H2O = ADP + phosphate + H(+). Component of the chaperonin-containing T-complex (TRiC), a molecular chaperone complex that assists the folding of actin, tubulin and other proteins upon ATP hydrolysis. The TRiC complex mediates the folding of WRAP53/TCAB1, thereby regulating telomere maintenance. In Homo sapiens (Human), this protein is T-complex protein 1 subunit eta (CCT7).